The primary structure comprises 683 residues: MWLKLFFLLLYFLVLFVLARFFEAIVWYETGIFATQLVDPVALSFKKLKTILECRGLGYSGLPEKKDVRELVEKSGDLMEGELYSALKEEEASESVSSTNFSGEMHFYELVEDTKDGIWLVQVIANDRSPLVGKIHWEKMVKKVSRFGIRTGTFNCSSDPRYCRRRGWVRSTLIMSVPQTSTSKGKVMLKEYSGRKIEVEHIFKWITAHAASRIKTIYNVEHLKEEWNKSDQYWVKIYLFANLDQPPAFFSALSIKFTGRVEFIFVNVENWNNKSYMTDIGIYNMPSYILRTPEGIYRYGNHTGEFISLQAMDSFLRSLQPEVNDLFVLSLVLVNLMAWMDLFITQGATIKRFVVLISTLGTYNSLLIISWLPVLGFLQLPYLDSFYDYSLRLLRYSNTTTLASWVRADWMFYTSHPALFLSTYLGHGLLIDYFEKKRRRSNNDEVNANNLEWLSSLWDWYTSYLFHPIASFQNFPVDSDWDEDPDLFLERLAFPDLWLHPLIPTDYIKNLPMWRFKCLGVQSEEEMSESSQDTENDSDSDNMDTFSSSKDIFEDKQSVVHSSPGRTSHCDTEACSCANKCESSPCERKRRSYGSHNTDEDMEPDWLTWPAGTLHCTECVVCLENFENGCLLMGLPCGHVFHQNCIVMWLAGGRHCCPVCRWPSYKKKQPYAQQQPLSNDVPS.

4 helical membrane-spanning segments follow: residues 6–26 (FFLLLYFLVLFVLARFFEAIV), 326–346 (LFVLSLVLVNLMAWMDLFITQ), 366–386 (LLIISWLPVLGFLQLPYLDSF), and 411–431 (MFYTSHPALFLSTYLGHGLLI). The segment covering 525-542 (EEMSESSQDTENDSDSDN) has biased composition (acidic residues). Residues 525–548 (EEMSESSQDTENDSDSDNMDTFSS) form a disordered region. Residues 619 to 661 (CVVCLENFENGCLLMGLPCGHVFHQNCIVMWLAGGRHCCPVCR) form an RING-type zinc finger.

As to quaternary structure, interacts with DERL1 and VCP. In terms of tissue distribution, highly expressed in the normal cerebellum but not in the cerebral cortex.

It localises to the endoplasmic reticulum membrane. It carries out the reaction S-ubiquitinyl-[E2 ubiquitin-conjugating enzyme]-L-cysteine + [acceptor protein]-L-lysine = [E2 ubiquitin-conjugating enzyme]-L-cysteine + N(6)-ubiquitinyl-[acceptor protein]-L-lysine.. Its pathway is protein modification; protein ubiquitination. In terms of biological role, acts as an E2-dependent E3 ubiquitin-protein ligase, probably involved in the ER-associated protein degradation pathway. In Mus musculus (Mouse), this protein is E3 ubiquitin-protein ligase RNF103 (Rnf103).